Consider the following 122-residue polypeptide: Large ribosomal subunit protein uL14 (122 aa).

Belongs to the universal ribosomal protein uL14 family. In terms of assembly, part of the 50S ribosomal subunit. Forms a cluster with proteins L3 and L19. In the 70S ribosome, L14 and L19 interact and together make contacts with the 16S rRNA in bridges B5 and B8.

In terms of biological role, binds to 23S rRNA. Forms part of two intersubunit bridges in the 70S ribosome. This Acinetobacter baumannii (strain AB307-0294) protein is Large ribosomal subunit protein uL14.